Here is a 732-residue protein sequence, read N- to C-terminus: Elongation factor 2 (732 aa).

The 242-residue stretch at 19–260 folds into the tr-type G domain; the sequence is ERIRNMGIAA…MVVRHLPNPL (242 aa). Residues 28-35, 94-98, and 148-151 each bind GTP; these read AHIDHGKT, DTPGH, and NKVD. Histidine 597 carries the diphthamide modification.

It belongs to the TRAFAC class translation factor GTPase superfamily. Classic translation factor GTPase family. EF-G/EF-2 subfamily.

The protein resides in the cytoplasm. Catalyzes the GTP-dependent ribosomal translocation step during translation elongation. During this step, the ribosome changes from the pre-translocational (PRE) to the post-translocational (POST) state as the newly formed A-site-bound peptidyl-tRNA and P-site-bound deacylated tRNA move to the P and E sites, respectively. Catalyzes the coordinated movement of the two tRNA molecules, the mRNA and conformational changes in the ribosome. The chain is Elongation factor 2 from Thermococcus onnurineus (strain NA1).